Consider the following 154-residue polypeptide: Myoglobin (154 aa).

In terms of domain architecture, Globin spans 2–148 (GLSDGEWQLV…FRNDMAAKYK (147 aa)). Phosphoserine is present on S4. Position 65 (H65) interacts with nitrite. An O2-binding site is contributed by H65. Position 68 is a phosphothreonine (T68). H94 provides a ligand contact to heme b.

It belongs to the globin family. In terms of assembly, monomeric.

It is found in the cytoplasm. The protein resides in the sarcoplasm. The enzyme catalyses Fe(III)-heme b-[protein] + nitric oxide + H2O = Fe(II)-heme b-[protein] + nitrite + 2 H(+). It carries out the reaction H2O2 + AH2 = A + 2 H2O. Functionally, monomeric heme protein which primary function is to store oxygen and facilitate its diffusion within muscle tissues. Reversibly binds oxygen through a pentacoordinated heme iron and enables its timely and efficient release as needed during periods of heightened demand. Depending on the oxidative conditions of tissues and cells, and in addition to its ability to bind oxygen, it also has a nitrite reductase activity whereby it regulates the production of bioactive nitric oxide. Under stress conditions, like hypoxia and anoxia, it also protects cells against reactive oxygen species thanks to its pseudoperoxidase activity. This Callithrix jacchus (White-tufted-ear marmoset) protein is Myoglobin (MB).